The primary structure comprises 116 residues: MAGKELERCQRQADEVTEIMLNNFDKVLERDGKLAELEQRSDQLLDMSSAFSKTTKTLAQKKRWENARCRIYMGLAVGIALLILLIVLLVIFLPQSSKGSSAPQVQDAGPASGPGE.

The Cytoplasmic segment spans residues 1 to 72; it reads MAGKELERCQ…RWENARCRIY (72 aa). The v-SNARE coiled-coil homology domain occupies 5 to 65; the sequence is ELERCQRQAD…KTLAQKKRWE (61 aa). Ser41, Ser48, and Ser49 each carry phosphoserine. A helical; Anchor for type IV membrane protein transmembrane segment spans residues 73–93; the sequence is MGLAVGIALLILLIVLLVIFL. Over 94-116 the chain is Vesicular; the sequence is PQSSKGSSAPQVQDAGPASGPGE. Residues 97–116 form a disordered region; that stretch reads SKGSSAPQVQDAGPASGPGE.

Belongs to the synaptobrevin family.

The protein localises to the cell membrane. Its subcellular location is the endomembrane system. It is found in the golgi apparatus. It localises to the trans-Golgi network membrane. In terms of biological role, may participate in trafficking events that are associated with myogenesis, such as myoblast fusion and/or GLUT4 trafficking. The protein is Vesicle-associated membrane protein 5 (VAMP5) of Bos taurus (Bovine).